A 352-amino-acid polypeptide reads, in one-letter code: Holliday junction branch migration complex subunit RuvB (352 aa).

The tract at residues 5-191 (TDDFSEQRII…FGIVARLEFY (187 aa)) is large ATPase domain (RuvB-L). Residues Leu-30, Arg-31, Gly-72, Lys-75, Thr-76, Thr-77, 138 to 140 (EDY), Arg-181, Tyr-191, and Arg-228 each bind ATP. Position 76 (Thr-76) interacts with Mg(2+). A small ATPAse domain (RuvB-S) region spans residues 192–262 (TPLELTKIVT…MADAALVMLD (71 aa)). The interval 265–352 (PVGFDLMDRK…GPNGDLWAGQ (88 aa)) is head domain (RuvB-H). The DNA site is built by Arg-301, Arg-320, and Arg-325.

The protein belongs to the RuvB family. Homohexamer. Forms an RuvA(8)-RuvB(12)-Holliday junction (HJ) complex. HJ DNA is sandwiched between 2 RuvA tetramers; dsDNA enters through RuvA and exits via RuvB. An RuvB hexamer assembles on each DNA strand where it exits the tetramer. Each RuvB hexamer is contacted by two RuvA subunits (via domain III) on 2 adjacent RuvB subunits; this complex drives branch migration. In the full resolvosome a probable DNA-RuvA(4)-RuvB(12)-RuvC(2) complex forms which resolves the HJ.

The protein resides in the cytoplasm. The enzyme catalyses ATP + H2O = ADP + phosphate + H(+). In terms of biological role, the RuvA-RuvB-RuvC complex processes Holliday junction (HJ) DNA during genetic recombination and DNA repair, while the RuvA-RuvB complex plays an important role in the rescue of blocked DNA replication forks via replication fork reversal (RFR). RuvA specifically binds to HJ cruciform DNA, conferring on it an open structure. The RuvB hexamer acts as an ATP-dependent pump, pulling dsDNA into and through the RuvAB complex. RuvB forms 2 homohexamers on either side of HJ DNA bound by 1 or 2 RuvA tetramers; 4 subunits per hexamer contact DNA at a time. Coordinated motions by a converter formed by DNA-disengaged RuvB subunits stimulates ATP hydrolysis and nucleotide exchange. Immobilization of the converter enables RuvB to convert the ATP-contained energy into a lever motion, pulling 2 nucleotides of DNA out of the RuvA tetramer per ATP hydrolyzed, thus driving DNA branch migration. The RuvB motors rotate together with the DNA substrate, which together with the progressing nucleotide cycle form the mechanistic basis for DNA recombination by continuous HJ branch migration. Branch migration allows RuvC to scan DNA until it finds its consensus sequence, where it cleaves and resolves cruciform DNA. This Janthinobacterium sp. (strain Marseille) (Minibacterium massiliensis) protein is Holliday junction branch migration complex subunit RuvB.